Consider the following 135-residue polypeptide: Aspartate 1-decarboxylase (135 aa).

Serine 25 acts as the Schiff-base intermediate with substrate; via pyruvic acid in catalysis. Pyruvic acid (Ser) is present on serine 25. Threonine 57 is a substrate binding site. Tyrosine 58 functions as the Proton donor in the catalytic mechanism. A substrate-binding site is contributed by 73-75; that stretch reads GAA.

The protein belongs to the PanD family. Heterooctamer of four alpha and four beta subunits. The cofactor is pyruvate. Is synthesized initially as an inactive proenzyme, which is activated by self-cleavage at a specific serine bond to produce a beta-subunit with a hydroxyl group at its C-terminus and an alpha-subunit with a pyruvoyl group at its N-terminus.

It is found in the cytoplasm. It carries out the reaction L-aspartate + H(+) = beta-alanine + CO2. Its pathway is cofactor biosynthesis; (R)-pantothenate biosynthesis; beta-alanine from L-aspartate: step 1/1. In terms of biological role, catalyzes the pyruvoyl-dependent decarboxylation of aspartate to produce beta-alanine. This Mycolicibacterium vanbaalenii (strain DSM 7251 / JCM 13017 / BCRC 16820 / KCTC 9966 / NRRL B-24157 / PYR-1) (Mycobacterium vanbaalenii) protein is Aspartate 1-decarboxylase.